The sequence spans 72 residues: Translation initiation factor IF-1 (72 aa).

In terms of domain architecture, S1-like spans Met1–Lys72.

The protein belongs to the IF-1 family. In terms of assembly, component of the 30S ribosomal translation pre-initiation complex which assembles on the 30S ribosome in the order IF-2 and IF-3, IF-1 and N-formylmethionyl-tRNA(fMet); mRNA recruitment can occur at any time during PIC assembly.

It localises to the cytoplasm. Its function is as follows. One of the essential components for the initiation of protein synthesis. Stabilizes the binding of IF-2 and IF-3 on the 30S subunit to which N-formylmethionyl-tRNA(fMet) subsequently binds. Helps modulate mRNA selection, yielding the 30S pre-initiation complex (PIC). Upon addition of the 50S ribosomal subunit IF-1, IF-2 and IF-3 are released leaving the mature 70S translation initiation complex. The protein is Translation initiation factor IF-1 of Bartonella bacilliformis (strain ATCC 35685 / KC583 / Herrer 020/F12,63).